The sequence spans 822 residues: Microcephalin (822 aa).

In terms of domain architecture, BRCT 1 spans 10 to 99 (AFLKDVVAYV…ALVDESLFPA (90 aa)). Disordered regions lie at residues 182–203 (MKEK…SQQN), 219–243 (PLSS…DQER), and 266–295 (SSFY…ESIN). Composition is skewed to polar residues over residues 189–203 (LSPT…SQQN) and 219–235 (PLSS…SSFG). 3 positions are modified to phosphoserine: Ser-273, Ser-290, and Ser-327. Thr-329 carries the post-translational modification Phosphothreonine. Disordered regions lie at residues 335–366 (EHQV…LKKR), 498–567 (NDSP…SPED), and 594–636 (TGYS…PTRT). The span at 522 to 541 (HPDTLSSSAHHITPLKGNST) shows a compositional bias: polar residues. 2 stretches are compositionally biased toward basic and acidic residues: residues 542–553 (ETRDPGDGKGSP) and 625–634 (KKSEKEEKPT). 2 BRCT domains span residues 627–717 (SEKE…PFEL) and 738–820 (YQGT…NYQL).

Interacts with CDC27 and maybe other components of the APC/C complex. Interacts with histone variant H2AX under DNA damage conditions. In terms of tissue distribution, high levels of expression are found in the developing forebrain and, in particular, in the walls of the lateral ventricles.

It is found in the cytoplasm. It localises to the cytoskeleton. The protein resides in the microtubule organizing center. The protein localises to the centrosome. In terms of biological role, implicated in chromosome condensation and DNA damage induced cellular responses. May play a role in neurogenesis and regulation of the size of the cerebral cortex. This Mus musculus (Mouse) protein is Microcephalin.